The following is a 566-amino-acid chain: Arginine--tRNA ligase (566 aa).

Positions 123–133 match the 'HIGH' region motif; the sequence is PNVAKPFHVGH.

Belongs to the class-I aminoacyl-tRNA synthetase family. Monomer.

The protein localises to the cytoplasm. The enzyme catalyses tRNA(Arg) + L-arginine + ATP = L-arginyl-tRNA(Arg) + AMP + diphosphate. In Alkaliphilus metalliredigens (strain QYMF), this protein is Arginine--tRNA ligase.